The primary structure comprises 475 residues: WASH complex subunit 1 (475 aa).

A required for WASH complex assembly region spans residues 1–54 (MTAVKTQHSLAGQVYAVPLIQPDLRREEAIQQVADALQYLQNISGDIFSRISQR). The segment at 1-167 (MTAVKTQHSL…EGLGGLPSNI (167 aa)) is WHD1. Residue Lys219 forms a Glycyl lysine isopeptide (Lys-Gly) (interchain with G-Cter in ubiquitin) linkage. The segment at 296–475 (EDGALLAPPP…GDEDEDDWES (180 aa)) is disordered. Pro residues predominate over residues 302-318 (APPPPPPPPPPPPPPAP). A VCA region spans residues 357-475 (QGAPKEVVDP…GDEDEDDWES (119 aa)). Positions 369-391 (GRATLLESIRQAGGIGKAKLRSV) constitute a WH2 domain. Positions 390 to 406 (SVKERKLEKKKQKEQEQ) are enriched in basic and acidic residues. Residues 432–446 (SGKGPGTGTSEGPGG) are compositionally biased toward gly residues. The segment covering 466-475 (GDEDEDDWES) has biased composition (acidic residues).

Belongs to the WASH1 family. As to quaternary structure, component of the WASH core complex also described as WASH regulatory complex SHRC composed of WASHC1, WASHC2, WASHC3, WASHC4 and WASHC5. The WASH core complex associates with the F-actin-capping protein dimer (formed by CAPZA1, CAPZA2 or CAPZA3 and CAPZB) in a transient or substoichiometric manner which was initially described as WASH complex. Interacts (via WHD1 region) with WASHC2; the interaction is direct. Interacts with BECN1; WASHC1 and AMBRA1 can competitively interact with BECN1. Interacts with BLOC1S2; may associate with the BLOC-1 complex. Interacts with tubulin gamma chain (TUBG1 or TUBG2). Interacts with TBC1D23. Post-translationally, ubiquitinated at Lys-219 via 'Lys-63'-linked ubiquitin chains by the TRIM27:MAGEL2 E3 ubiquitin ligase complex, leading to promote endosomal F-actin assembly.

The protein resides in the early endosome membrane. The protein localises to the recycling endosome membrane. In terms of biological role, acts as a component of the WASH core complex that functions as a nucleation-promoting factor (NPF) at the surface of endosomes, where it recruits and activates the Arp2/3 complex to induce actin polymerization, playing a key role in the fission of tubules that serve as transport intermediates during endosome sorting. Regulates the trafficking of endosomal alpha5beta1 integrin to the plasma membrane and involved in invasive cell migration. In T-cells involved in endosome-to-membrane recycling of receptors including T-cell receptor (TCR), CD28 and ITGAL; proposed to be implicated in T-cell proliferation and effector function. In dendritic cells involved in endosome-to-membrane recycling of major histocompatibility complex (MHC) class II probably involving retromer and subsequently allowing antigen sampling, loading and presentation during T-cell activation. Involved in cytokinesis and following polar body extrusion during oocyte meiotic maturation. Involved in Arp2/3 complex-dependent actin assembly driving Salmonella typhimurium invasion independent of ruffling. Involved in the exocytosis of MMP14 leading to matrix remodeling during invasive migration and implicating late endosome-to-plasma membrane tubular connections and cooperation with the exocyst complex. Involved in negative regulation of autophagy independently from its role in endosomal sorting by inhibiting BECN1 ubiquitination to inactivate PIK3C3/Vps34 activity. This chain is WASH complex subunit 1, found in Rattus norvegicus (Rat).